A 133-amino-acid polypeptide reads, in one-letter code: Nickel-responsive regulator (133 aa).

Residues His76, His87, His89, and Cys95 each coordinate Ni(2+).

Belongs to the transcriptional regulatory CopG/NikR family. As to quaternary structure, homotetramer. It depends on Ni(2+) as a cofactor.

Its function is as follows. Transcriptional repressor of the nikABCDE operon. Is active in the presence of excessive concentrations of intracellular nickel. The protein is Nickel-responsive regulator of Escherichia coli (strain SE11).